The sequence spans 455 residues: Asparagine--tRNA ligase (455 aa).

It belongs to the class-II aminoacyl-tRNA synthetase family. As to quaternary structure, homodimer.

Its subcellular location is the cytoplasm. It catalyses the reaction tRNA(Asn) + L-asparagine + ATP = L-asparaginyl-tRNA(Asn) + AMP + diphosphate + H(+). The protein is Asparagine--tRNA ligase of Mycoplasma pneumoniae (strain ATCC 29342 / M129 / Subtype 1) (Mycoplasmoides pneumoniae).